Here is a 326-residue protein sequence, read N- to C-terminus: DNA-directed RNA polymerase subunit alpha (326 aa).

The segment at 1 to 232 (MQGSARNFLK…EQLSSFVELE (232 aa)) is alpha N-terminal domain (alpha-NTD). Positions 246–326 (FDPQLLAAVD…NWPPVDLMSE (81 aa)) are alpha C-terminal domain (alpha-CTD).

This sequence belongs to the RNA polymerase alpha chain family. Homodimer. The RNAP catalytic core consists of 2 alpha, 1 beta, 1 beta' and 1 omega subunit. When a sigma factor is associated with the core the holoenzyme is formed, which can initiate transcription.

It carries out the reaction RNA(n) + a ribonucleoside 5'-triphosphate = RNA(n+1) + diphosphate. Its function is as follows. DNA-dependent RNA polymerase catalyzes the transcription of DNA into RNA using the four ribonucleoside triphosphates as substrates. The protein is DNA-directed RNA polymerase subunit alpha of Ruthia magnifica subsp. Calyptogena magnifica.